The following is a 249-amino-acid chain: 5'-nucleotidase SurE (249 aa).

Residues aspartate 9, aspartate 10, serine 40, and asparagine 92 each contribute to the a divalent metal cation site.

This sequence belongs to the SurE nucleotidase family. It depends on a divalent metal cation as a cofactor.

The protein localises to the cytoplasm. It carries out the reaction a ribonucleoside 5'-phosphate + H2O = a ribonucleoside + phosphate. Nucleotidase that shows phosphatase activity on nucleoside 5'-monophosphates. This is 5'-nucleotidase SurE from Shewanella oneidensis (strain ATCC 700550 / JCM 31522 / CIP 106686 / LMG 19005 / NCIMB 14063 / MR-1).